Reading from the N-terminus, the 137-residue chain is ATP synthase epsilon chain, chloroplastic (137 aa).

The protein belongs to the ATPase epsilon chain family. As to quaternary structure, F-type ATPases have 2 components, CF(1) - the catalytic core - and CF(0) - the membrane proton channel. CF(1) has five subunits: alpha(3), beta(3), gamma(1), delta(1), epsilon(1). CF(0) has three main subunits: a, b and c.

Its subcellular location is the plastid. It is found in the chloroplast thylakoid membrane. Produces ATP from ADP in the presence of a proton gradient across the membrane. This chain is ATP synthase epsilon chain, chloroplastic, found in Agrostis stolonifera (Creeping bentgrass).